A 473-amino-acid chain; its full sequence is Ribosomal RNA small subunit methyltransferase F (473 aa).

S-adenosyl-L-methionine is bound by residues Ala124–Lys130, Glu148, Asp175, and Asp193. The active-site Nucleophile is Cys246.

Belongs to the class I-like SAM-binding methyltransferase superfamily. RsmB/NOP family.

Its subcellular location is the cytoplasm. The catalysed reaction is cytidine(1407) in 16S rRNA + S-adenosyl-L-methionine = 5-methylcytidine(1407) in 16S rRNA + S-adenosyl-L-homocysteine + H(+). In terms of biological role, specifically methylates the cytosine at position 1407 (m5C1407) of 16S rRNA. The sequence is that of Ribosomal RNA small subunit methyltransferase F from Aliivibrio fischeri (strain MJ11) (Vibrio fischeri).